The chain runs to 112 residues: Toxin-like structure LSTX-D10 (112 aa).

A signal peptide spans 1 to 20; it reads MMKVLVVVALLVTLISYSSS. Residues 21-41 constitute a propeptide that is removed on maturation; the sequence is EGIDDLEADELLSLMANEQTR. Cystine bridges form between cysteine 45–cysteine 60, cysteine 52–cysteine 69, cysteine 59–cysteine 84, and cysteine 71–cysteine 82.

Belongs to the neurotoxin 19 (CSTX) family. 01 subfamily. In terms of tissue distribution, expressed by the venom gland.

It localises to the secreted. The protein is Toxin-like structure LSTX-D10 of Lycosa singoriensis (Wolf spider).